The primary structure comprises 130 residues: Small ribosomal subunit protein uS9 (130 aa).

The interval 98–130 is disordered; that stretch reads LKRAGLLTRDPRMKERKKPGLKKARRSPQFSKR. Over residues 111–130 the composition is skewed to basic residues; sequence KERKKPGLKKARRSPQFSKR.

It belongs to the universal ribosomal protein uS9 family.

This is Small ribosomal subunit protein uS9 from Staphylococcus haemolyticus (strain JCSC1435).